Consider the following 374-residue polypeptide: Flap endonuclease 1 (374 aa).

The segment at 1–105 (MGIKGLTALI…ELLQKRFGRR (105 aa)) is N-domain. Mg(2+) is bound at residue D34. Positions 47 and 71 each coordinate DNA. D87 is a Mg(2+) binding site. The segment at 103–122 (GRREEAREQEEEQKDVADAE) is disordered. The interval 123-254 (KMDQLARRQV…KTALKLIREH (132 aa)) is I-domain. Residues E159, E161, D180, and D182 each coordinate Mg(2+). E159 contributes to the DNA binding site. 2 residues coordinate DNA: G232 and D234. D234 contributes to the Mg(2+) binding site. Positions 335–374 (SLSQKQQGRLDGFFTVKPGSAPPKRKAEDDKKNVKKKGKK) are disordered. The segment at 340 to 348 (QQGRLDGFF) is interaction with PCNA.

It belongs to the XPG/RAD2 endonuclease family. FEN1 subfamily. Interacts with PCNA. Three molecules of FEN1 bind to one PCNA trimer with each molecule binding to one PCNA monomer. PCNA stimulates the nuclease activity without altering cleavage specificity. The cofactor is Mg(2+). In terms of processing, phosphorylated. Phosphorylation upon DNA damage induces relocalization to the nuclear plasma.

It is found in the nucleus. Its subcellular location is the nucleolus. The protein localises to the nucleoplasm. The protein resides in the mitochondrion. In terms of biological role, structure-specific nuclease with 5'-flap endonuclease and 5'-3' exonuclease activities involved in DNA replication and repair. During DNA replication, cleaves the 5'-overhanging flap structure that is generated by displacement synthesis when DNA polymerase encounters the 5'-end of a downstream Okazaki fragment. It enters the flap from the 5'-end and then tracks to cleave the flap base, leaving a nick for ligation. Also involved in the long patch base excision repair (LP-BER) pathway, by cleaving within the apurinic/apyrimidinic (AP) site-terminated flap. Acts as a genome stabilization factor that prevents flaps from equilibrating into structures that lead to duplications and deletions. Also possesses 5'-3' exonuclease activity on nicked or gapped double-stranded DNA, and exhibits RNase H activity. Also involved in replication and repair of rDNA and in repairing mitochondrial DNA. The sequence is that of Flap endonuclease 1 from Mycosarcoma maydis (Corn smut fungus).